A 101-amino-acid polypeptide reads, in one-letter code: MIPGELVIDDGEHTLNAGRHTIALVVANTGDRPVQVGSHYHFHEVNDALSFDRAAARGFRLNIAAGTAVRFEPGQTRTVELVELGGARAVYGFQGKVMGPL.

Belongs to the urease beta subunit family. As to quaternary structure, heterotrimer of UreA (gamma), UreB (beta) and UreC (alpha) subunits. Three heterotrimers associate to form the active enzyme.

It is found in the cytoplasm. The catalysed reaction is urea + 2 H2O + H(+) = hydrogencarbonate + 2 NH4(+). It functions in the pathway nitrogen metabolism; urea degradation; CO(2) and NH(3) from urea (urease route): step 1/1. The polypeptide is Urease subunit beta (Burkholderia mallei (strain NCTC 10247)).